Reading from the N-terminus, the 249-residue chain is Elsinochromes biosynthesis cluster protein HP3 (249 aa).

The N-linked (GlcNAc...) asparagine glycan is linked to N106. A helical membrane pass occupies residues 138-158; sequence VVFAFMLSAWLVWLITVYAFA.

The protein localises to the membrane. Functionally, part of the gene cluster that mediates the biosynthesis of elsinochromes, pigments consisting of at least four interconvertible tautomers (A, B, C and D) that have a core phenolic quinone to which various side chains are attached and which play an important role in fungal pathogenesis. The non-reducing polyketide synthase PKS1 was proposed to iteratively catalyze decarboxylation between acetyl-CoA and malonyl-CoA subunits for polyketide chain elongation. The released polyketide undergoes cyclization to form an aromatic ring, and proceeds via serial modification steps to produce the heptaketide back- bone of elsinochrome. As elsinochrome has a symmetrical structure, two identical heptaketides are fused to form a core 1,2-dihydrobenzo-perylene ring structure, which can then be successively modified to produce the various derivatives of elsinochrome. Some of these reactions may be cooperatively carried out, at least in part, by the products of RDT1, OXR1 and PKS1. PRF1, embedded within the elsinochrome cluster possibly functions to stabilize some of the biosynthetic enzymes required for elsinochrome production. As prefoldin is a hexamer containing 2 a and 4 b subunits, additional prefoldin subunits, whose coding genes may not immediately link to the elsinochrome biosynthetic gene cluster, are required to fulfill the chaperone function. In addition, no methyltransferase-coding gene exists within the biosynthetic gene cluster, even though elsinochrome has four methyl groups at positions C3, C7, C8 and C12. Apparently, the identified gene cluster does not contain the entire entourage of genes responsible for elsinochrome biosynthesis. Once elsinochrome is synthesized, it must be exported outside the fungal cells, which is probably accomplished by the ECT1 transporter, to avoid toxicity. The sequence is that of Elsinochromes biosynthesis cluster protein HP3 from Elsinoe fawcettii (Citrus scab fungus).